The chain runs to 1637 residues: Probable serine/threonine-protein kinase gdt2 (1637 aa).

Positions 1 to 19 (MNYILYILLILIIFSINNT) are cleaved as a signal peptide. Residues 20–896 (FSIGSFVYTP…IPVEKINLLP (877 aa)) lie on the Extracellular side of the membrane. The chain crosses the membrane as a helical span at residues 897 to 917 (IIVPICVTVLVLLSILIVFFG). The Cytoplasmic portion of the chain corresponds to 918 to 1637 (ARYYKHKKRR…NNNNNNNNNN (720 aa)). The segment covering 977–990 (SDIQTQSENNNLEP) has biased composition (polar residues). Residues 977–1000 (SDIQTQSENNNLEPTTVETTTTTT) form a disordered region. Residues 991 to 1000 (TTVETTTTTT) are compositionally biased toward low complexity. A Protein kinase domain is found at 1290–1547 (IIIKNYISEG…LSKYLKHLLK (258 aa)). ATP is bound by residues 1296–1304 (ISEGTFGIV) and K1317. D1408 acts as the Proton acceptor in catalysis. The interval 1557–1637 (DKDKKNKKKN…NNNNNNNNNN (81 aa)) is disordered. 2 stretches are compositionally biased toward low complexity: residues 1568–1589 (NNNNNNNNNNNNNNNNNNNNNN) and 1597–1637 (NNNI…NNNN).

In the N-terminal section; belongs to the GDT family. The protein in the C-terminal section; belongs to the protein kinase superfamily. TKL Ser/Thr protein kinase family.

It is found in the membrane. It catalyses the reaction L-seryl-[protein] + ATP = O-phospho-L-seryl-[protein] + ADP + H(+). The enzyme catalyses L-threonyl-[protein] + ATP = O-phospho-L-threonyl-[protein] + ADP + H(+). In terms of biological role, regulates the transition between growth and differentiation. In Dictyostelium discoideum (Social amoeba), this protein is Probable serine/threonine-protein kinase gdt2 (gdt2).